The sequence spans 245 residues: tRNA pseudouridine synthase A (245 aa).

The Nucleophile role is filled by Asp52. Tyr111 serves as a coordination point for substrate.

Belongs to the tRNA pseudouridine synthase TruA family. In terms of assembly, homodimer.

It carries out the reaction uridine(38/39/40) in tRNA = pseudouridine(38/39/40) in tRNA. Functionally, formation of pseudouridine at positions 38, 39 and 40 in the anticodon stem and loop of transfer RNAs. In Wolbachia sp. subsp. Drosophila simulans (strain wRi), this protein is tRNA pseudouridine synthase A.